The primary structure comprises 286 residues: MASLAKNILQFRSKITGKLNTPDFRVYCYKNNKPISFFHDVPLTSDKDTFNMVTEIPRWTQAKCEISLTSPFHPIKQDLKNGKLRYVANSFPYHGFIWNYGALPQTWEDPNVIDSRTKMKGDGDPLDVCEIGGSIGYIGQIKQVKVLGALGLIDQGETDWKILAIDINDPRAKLLNDISDVQNLMPRLLPCTRDWFAIYKIPDGKPKNRFFFDGNYLPKSDALDIIAQCHQHWKVSRDRKQYIKNFHNESVNNVDLINKINSLKEEVSQNVSNYPSFPYFHTIPNL.

Arg85 is a diphosphate binding site. The Mg(2+) site is built by Asp122, Asp127, and Asp159.

It belongs to the PPase family. Requires Mg(2+) as cofactor.

The protein resides in the cytoplasm. It carries out the reaction diphosphate + H2O = 2 phosphate + H(+). The protein is Putative inorganic pyrophosphatase C3A12.02 of Schizosaccharomyces pombe (strain 972 / ATCC 24843) (Fission yeast).